The chain runs to 121 residues: Type II secretion system protein I (121 aa).

The propeptide at 1 to 6 (MKKQSG) is leader sequence. M7 is modified (N-methylmethionine). A helical membrane pass occupies residues 7-27 (MTLIEVMVALVVFALAGLAVM).

The protein belongs to the GSP I family. Type II secretion is composed of four main components: the outer membrane complex, the inner membrane complex, the cytoplasmic secretion ATPase and the periplasm-spanning pseudopilus. Interacts with core component PulG. Post-translationally, cleaved by prepilin peptidase. Methylated by prepilin peptidase at the amino group of the N-terminal methionine once the leader sequence is cleaved by prepilin peptidase.

Its subcellular location is the cell inner membrane. Its function is as follows. Component of the type II secretion system required for the energy-dependent secretion of extracellular factors such as proteases and toxins from the periplasm. Part of the pseudopilus tip complex that is critical for the recognition and binding of secretion substrates. This chain is Type II secretion system protein I (pulI), found in Klebsiella pneumoniae.